A 380-amino-acid chain; its full sequence is Ribosomal RNA large subunit methyltransferase F (380 aa).

Residues 1–32 (MSHKTKPSTQERKAGKPSAPKRKVISKSPNSK) are disordered.

This sequence belongs to the methyltransferase superfamily. METTL16/RlmF family.

It localises to the cytoplasm. It carries out the reaction adenosine(1618) in 23S rRNA + S-adenosyl-L-methionine = N(6)-methyladenosine(1618) in 23S rRNA + S-adenosyl-L-homocysteine + H(+). Functionally, specifically methylates the adenine in position 1618 of 23S rRNA. The polypeptide is Ribosomal RNA large subunit methyltransferase F (Shewanella halifaxensis (strain HAW-EB4)).